Consider the following 82-residue polypeptide: Exodeoxyribonuclease 7 small subunit (82 aa).

Belongs to the XseB family. As to quaternary structure, heterooligomer composed of large and small subunits.

The protein resides in the cytoplasm. It catalyses the reaction Exonucleolytic cleavage in either 5'- to 3'- or 3'- to 5'-direction to yield nucleoside 5'-phosphates.. Bidirectionally degrades single-stranded DNA into large acid-insoluble oligonucleotides, which are then degraded further into small acid-soluble oligonucleotides. The chain is Exodeoxyribonuclease 7 small subunit from Pectobacterium atrosepticum (strain SCRI 1043 / ATCC BAA-672) (Erwinia carotovora subsp. atroseptica).